The sequence spans 334 residues: Adenosine deaminase (334 aa).

Positions 12 and 14 each coordinate Zn(2+). Residues histidine 14, aspartate 16, and glycine 170 each coordinate substrate. Histidine 197 contacts Zn(2+). Glutamate 200 serves as the catalytic Proton donor. Position 278 (aspartate 278) interacts with Zn(2+). Aspartate 279 provides a ligand contact to substrate.

It belongs to the metallo-dependent hydrolases superfamily. Adenosine and AMP deaminases family. Adenosine deaminase subfamily. It depends on Zn(2+) as a cofactor.

It catalyses the reaction adenosine + H2O + H(+) = inosine + NH4(+). The enzyme catalyses 2'-deoxyadenosine + H2O + H(+) = 2'-deoxyinosine + NH4(+). Functionally, catalyzes the hydrolytic deamination of adenosine and 2-deoxyadenosine. This chain is Adenosine deaminase, found in Yersinia pseudotuberculosis serotype O:1b (strain IP 31758).